The chain runs to 102 residues: Cytochrome b (102 aa).

Helical transmembrane passes span 1–21 (FGSL…FLAM), 45–66 (WLIR…YLHI), and 81–101 (WNIG…GYVL). 2 residues coordinate heme b: histidine 51 and histidine 65.

Belongs to the cytochrome b family. As to quaternary structure, the cytochrome bc1 complex contains 3 respiratory subunits (MT-CYB, CYC1 and UQCRFS1), 2 core proteins (UQCRC1 and UQCRC2) and probably 6 low-molecular weight proteins. Heme b is required as a cofactor.

It localises to the mitochondrion inner membrane. Its function is as follows. Component of the ubiquinol-cytochrome c reductase complex (complex III or cytochrome b-c1 complex) that is part of the mitochondrial respiratory chain. The b-c1 complex mediates electron transfer from ubiquinol to cytochrome c. Contributes to the generation of a proton gradient across the mitochondrial membrane that is then used for ATP synthesis. In Megalops atlanticus (Tarpon), this protein is Cytochrome b (mt-cyb).